The primary structure comprises 120 residues: Small ribosomal subunit protein eS25 (120 aa).

The tract at residues 1 to 32 (MPPKAGQTKKAKMEAANKGAKKTTKKWSKGQS) is disordered. Residues 19–28 (GAKKTTKKWS) are compositionally biased toward basic residues.

This sequence belongs to the eukaryotic ribosomal protein eS25 family.

The polypeptide is Small ribosomal subunit protein eS25 (RPS25) (Leishmania infantum).